We begin with the raw amino-acid sequence, 212 residues long: Octanoyltransferase (212 aa).

Positions 31–209 (AETQDEIWLV…HFADLLGYNI (179 aa)) constitute a BPL/LPL catalytic domain. Substrate is bound by residues 70-77 (RGGQITYH), 138-140 (SLG), and 151-153 (GLA). Catalysis depends on Cys-169, which acts as the Acyl-thioester intermediate.

The protein belongs to the LipB family.

It localises to the cytoplasm. It catalyses the reaction octanoyl-[ACP] + L-lysyl-[protein] = N(6)-octanoyl-L-lysyl-[protein] + holo-[ACP] + H(+). It participates in protein modification; protein lipoylation via endogenous pathway; protein N(6)-(lipoyl)lysine from octanoyl-[acyl-carrier-protein]: step 1/2. In terms of biological role, catalyzes the transfer of endogenously produced octanoic acid from octanoyl-acyl-carrier-protein onto the lipoyl domains of lipoate-dependent enzymes. Lipoyl-ACP can also act as a substrate although octanoyl-ACP is likely to be the physiological substrate. This is Octanoyltransferase from Haemophilus influenzae (strain PittGG).